We begin with the raw amino-acid sequence, 524 residues long: Ribonuclease Y (524 aa).

The helical transmembrane segment at 7–27 (LGGLLTGIVIAIIASIIASVI) threads the bilayer. The KH domain occupies 214–299 (TVSVVPLPND…EMVEKARKEV (86 aa)). Residues 340-433 (VLSHSIEVAR…VQAADSISAA (94 aa)) enclose the HD domain.

This sequence belongs to the RNase Y family.

It is found in the cell membrane. Functionally, endoribonuclease that initiates mRNA decay. The protein is Ribonuclease Y of Acetivibrio thermocellus (strain ATCC 27405 / DSM 1237 / JCM 9322 / NBRC 103400 / NCIMB 10682 / NRRL B-4536 / VPI 7372) (Clostridium thermocellum).